The chain runs to 98 residues: NADH-ubiquinone oxidoreductase chain 4L (98 aa).

Transmembrane regions (helical) follow at residues 1–21 (MSMVYANIFLAFIMSLMGLLM), 29–49 (SLLCLEGMMLSLFVMMTVTIL), and 61–81 (IILLVFAACEAALGLLLLVMV).

It belongs to the complex I subunit 4L family. Core subunit of respiratory chain NADH dehydrogenase (Complex I) which is composed of 45 different subunits.

The protein resides in the mitochondrion inner membrane. It carries out the reaction a ubiquinone + NADH + 5 H(+)(in) = a ubiquinol + NAD(+) + 4 H(+)(out). Its function is as follows. Core subunit of the mitochondrial membrane respiratory chain NADH dehydrogenase (Complex I) which catalyzes electron transfer from NADH through the respiratory chain, using ubiquinone as an electron acceptor. Part of the enzyme membrane arm which is embedded in the lipid bilayer and involved in proton translocation. The protein is NADH-ubiquinone oxidoreductase chain 4L (MT-ND4L) of Pusa hispida (Ringed seal).